A 92-amino-acid chain; its full sequence is Small nuclear ribonucleoprotein E (92 aa).

The Sm domain occupies 18 to 92 (INLIFRYLQN…NITLLQSVSN (75 aa)).

This sequence belongs to the snRNP Sm proteins family. Core component of the spliceosomal U1, U2, U4 and U5 small nuclear ribonucleoproteins (snRNPs), the building blocks of the spliceosome. Most spliceosomal snRNPs contain a common set of Sm proteins, snrpb, snrpd1, snrpd2, snrpd3, snrpe, snrpf and snrpg that assemble in a heptameric protein ring on the Sm site of the small nuclear RNA to form the core snRNP. Component of the U1 snRNP. The U1 snRNP is composed of the U1 snRNA and the 7 core Sm proteins snrpb, snrpd1, snrpd2, snrpd3, snrpe, snrpf and snrpg, and at least three U1 snRNP-specific proteins snrnp70/u1-70k, snrpa/u1-a and snrpc/u1-c. Component of the U4/U6-U5 tri-snRNP complex composed of the U4, U6 and U5 snRNAs and at least prpf3, prpf4, prpf6, prpf8, prpf31, snrnp200, txnl4a, snrnp40, snrpb, snrpd1, snrpd2, snrpd3, snrpe, snrpf, snrpg, ddx23, cd2bp2, ppih, snu13, eftud2, sart1 and usp39, plus lsm2, lsm3, lsm4, lsm5, lsm6, lsm7 and lsm8. Component of the U7 snRNP complex, or U7 Sm protein core complex, that is composed of the U7 snRNA and at least lsm10, lsm11, snrpb, snrpd3, snrpe, snrpf and snrpg; the complex does not contain snrpd1 and snrpd2. Component of the minor spliceosome, which splices U12-type introns. Part of the SMN-Sm complex that contains smn1, gemin2/sip1, ddx20/gemin3, gemin4, gemin5, gemin6, gemin7, gemin8, strap/unrip and the Sm proteins snrpb, snrpd1, snrpd2, snrpd3, snrpe, snrpf and snrpg; catalyzes core snRNPs assembly. Forms a 6S pICln-Sm complex composed of clns1a/pICln, snrpd1, snrpd2, snrpe, snrpf and snrpg; ring-like structure where clns1a/pICln mimics additional Sm proteins and which is unable to assemble into the core snRNP.

The protein resides in the cytoplasm. It is found in the cytosol. Its subcellular location is the nucleus. Plays a role in pre-mRNA splicing as a core component of the spliceosomal U1, U2, U4 and U5 small nuclear ribonucleoproteins (snRNPs), the building blocks of the spliceosome. Component of both the pre-catalytic spliceosome B complex and activated spliceosome C complexes. As a component of the minor spliceosome, involved in the splicing of U12-type introns in pre-mRNAs. As part of the U7 snRNP it is involved in histone 3'-end processing. This Danio rerio (Zebrafish) protein is Small nuclear ribonucleoprotein E (snrpe).